Reading from the N-terminus, the 197-residue chain is Translation initiation factor IF-3 (197 aa).

It belongs to the IF-3 family. As to quaternary structure, monomer.

The protein resides in the cytoplasm. Functionally, IF-3 binds to the 30S ribosomal subunit and shifts the equilibrium between 70S ribosomes and their 50S and 30S subunits in favor of the free subunits, thus enhancing the availability of 30S subunits on which protein synthesis initiation begins. The chain is Translation initiation factor IF-3 from Prosthecochloris aestuarii (strain DSM 271 / SK 413).